The chain runs to 346 residues: KLSKNKSDRYLPKVGDSLPESIDWREKGVLVGVKDQGSCGSCWAFSAVAAMESINAIVTGNLISLSEQELVDCDRSYNEGCDGGLMDYAFEFVIKNGGIDTEEDYPYKERNGVCDQYRKNAKVVKIDSYEDVPVNNEKALQKAVAHQPVSIALEAGGRDFQHYKSGIFTGKCGTAVDHGVVIAGYGTENGMDYWIVRNSWGANCRENGYLRVQRNVSSSSGLCGLAIEPSYPVKTGPNPPKPAPSPPSPVKPPTECDEYSQCAVGTTCCCILQFRRSCFSWGCCPLEGATCCEDHYSCCPHDYPICNVRQGTCSMSKGNPLGVKAMKRILAQPIGAFGNGGKKSSS.

A propeptide spans 1–17 (KLSKNKSDRYLPKVGDS) (activation peptide). 5 cysteine pairs are disulfide-bonded: C39/C81, C73/C114, C172/C223, C256/C268, and C262/C283. C42 is a catalytic residue. Residues H178 and N198 contribute to the active site. The N-linked (GlcNAc...) asparagine glycan is linked to N215. Positions 238–346 (NPPKPAPSPP…FGNGGKKSSS (109 aa)) are cleaved as a propeptide — removed in mature form.

It belongs to the peptidase C1 family.

The polypeptide is Low-temperature-induced cysteine proteinase (Solanum lycopersicum (Tomato)).